The chain runs to 666 residues: MDIFQAVPLHLQIPRIEIPKMASAASTPSTMSSSQTWSSSRPQVPISYQQLRKLSEWGIEALKDTSPTVVGQDRFESQEILIDNDYRTDFLNSHEEDSRWSKQVDLIMKQLPYGDLDAFVDEFHYEIISSQLLTSSIASHHQLFTVQKSILNFNKENTLSIHNAEGKTIPTKYGQLLISGKKFYLQRTIPYMFTILTARKAFRKMLYKRHLPRSSLMSLLMIAVYLALQQEYFHAKYSKYTALLNLRQMNAALQSVDKLIYRYHLTYKELTIYKPIALTENRGLRSDEARTLTLLTDVLTCTVDQLFHKLNIASSNILPVVNAVQLTDYISIYNVDLQSLYQMIRTVESLDITQKLERLQYMRKFFLCCLLSINYTDPLKKCEIALVLKRIFPGYHVEKTSDIERFQIISKQLYTLTQGISSLLPVLHHYKHLLLSVYGSTIEKEDPESKEAVITQSIYRLSELQRYLMKQDKTSTELSSHLIDELNGIIQIWNIDYKHNSHEQLKPPKCSPRPSSQRVFSGGLNLDIVKTTSDIPVVVDSFPKLTSLVDVLEVDETGSDIEKEHEELVYGTENDQETASSNDSKFSRFTDDQLRHELNQRILNLSIENKKSRENLRKQKSFELMNRKIENQKKGRPQIDCKGLFNSEESIPVLFELKQFLNRRSD.

Residues 214–230 (SSLMSLLMIAVYLALQQ) traverse the membrane as a helical segment. N-linked (GlcNAc...) asparagine glycosylation is found at Asn-374, Asn-582, and Asn-604. A disordered region spans residues 562 to 586 (EKEHEELVYGTENDQETASSNDSKF).

It belongs to the INP2 family.

It localises to the peroxisome membrane. Its function is as follows. Required for peroxisome inheritance. The polypeptide is Inheritance of peroxisomes protein 2 (INP2) (Kluyveromyces lactis (strain ATCC 8585 / CBS 2359 / DSM 70799 / NBRC 1267 / NRRL Y-1140 / WM37) (Yeast)).